Here is a 286-residue protein sequence, read N- to C-terminus: Bifunctional protein FolD (286 aa).

NADP(+)-binding positions include 166–168 (GAS) and isoleucine 232.

The protein belongs to the tetrahydrofolate dehydrogenase/cyclohydrolase family. Homodimer.

It catalyses the reaction (6R)-5,10-methylene-5,6,7,8-tetrahydrofolate + NADP(+) = (6R)-5,10-methenyltetrahydrofolate + NADPH. The catalysed reaction is (6R)-5,10-methenyltetrahydrofolate + H2O = (6R)-10-formyltetrahydrofolate + H(+). It participates in one-carbon metabolism; tetrahydrofolate interconversion. In terms of biological role, catalyzes the oxidation of 5,10-methylenetetrahydrofolate to 5,10-methenyltetrahydrofolate and then the hydrolysis of 5,10-methenyltetrahydrofolate to 10-formyltetrahydrofolate. This Marinobacter nauticus (strain ATCC 700491 / DSM 11845 / VT8) (Marinobacter aquaeolei) protein is Bifunctional protein FolD.